We begin with the raw amino-acid sequence, 341 residues long: TERF1-interacting nuclear factor 2 (341 aa).

The residue at position 2 (Ala-2) is an N-acetylalanine. The TBM signature appears at 243 to 265 (HRFNLAPLGKRKSRSHWTSAKAC). The Nuclear localization signal motif lies at 249–255 (PLGKRKS). A disordered region spans residues 283 to 341 (PAQDLSNPKSREEPGAASAASVGTEPVCTEEAKTPSRPLGKRALEETPPDSPAASRRTV).

As to quaternary structure, monomer. Found in a complex with POT1; TERF1 and TNKS1. Component of the shelterin complex (telosome) composed of TERF1, TERF2, TINF2, TERF2IP, ACD and POT1. Interacts with TERF1.

It is found in the nucleus. The protein localises to the chromosome. Its subcellular location is the telomere. Component of the shelterin complex (telosome) that is involved in the regulation of telomere length and protection. Shelterin associates with arrays of double-stranded TTAGGG repeats added by telomerase and protects chromosome ends; without its protective activity, telomeres are no longer hidden from the DNA damage surveillance and chromosome ends are inappropriately processed by DNA repair pathways. Plays a role in shelterin complex assembly. This Mus musculus (Mouse) protein is TERF1-interacting nuclear factor 2 (Tinf2).